We begin with the raw amino-acid sequence, 179 residues long: ATP synthase subunit b (179 aa).

Residues 29–48 (VINLAILIGVLVYFGRGVLG) form a helical membrane-spanning segment.

It belongs to the ATPase B chain family. F-type ATPases have 2 components, F(1) - the catalytic core - and F(0) - the membrane proton channel. F(1) has five subunits: alpha(3), beta(3), gamma(1), delta(1), epsilon(1). F(0) has four main subunits: a(1), b(1), b'(1) and c(10-14). The alpha and beta chains form an alternating ring which encloses part of the gamma chain. F(1) is attached to F(0) by a central stalk formed by the gamma and epsilon chains, while a peripheral stalk is formed by the delta, b and b' chains.

Its subcellular location is the cellular thylakoid membrane. F(1)F(0) ATP synthase produces ATP from ADP in the presence of a proton or sodium gradient. F-type ATPases consist of two structural domains, F(1) containing the extramembraneous catalytic core and F(0) containing the membrane proton channel, linked together by a central stalk and a peripheral stalk. During catalysis, ATP synthesis in the catalytic domain of F(1) is coupled via a rotary mechanism of the central stalk subunits to proton translocation. Its function is as follows. Component of the F(0) channel, it forms part of the peripheral stalk, linking F(1) to F(0). Functionally, the complex from the organism is particularly stable to disruption and remains functional after 6 hrs at 55 degrees Celsius. In Thermosynechococcus vestitus (strain NIES-2133 / IAM M-273 / BP-1), this protein is ATP synthase subunit b.